The primary structure comprises 111 residues: uncharacterized protein (111 aa).

The helical transmembrane segment at 18–41 (FFYFFFISFYTLWIVFFLLHLSFF) threads the bilayer.

The protein localises to the membrane. This is an uncharacterized protein from Saccharomyces cerevisiae (strain ATCC 204508 / S288c) (Baker's yeast).